Here is a 398-residue protein sequence, read N- to C-terminus: tRNA pseudouridine synthase D (398 aa).

Catalysis depends on Asp76, which acts as the Nucleophile. The 211-residue stretch at 151–361 (GVPNRFGVQR…MEGERRPLRV (211 aa)) folds into the TRUD domain.

The protein belongs to the pseudouridine synthase TruD family.

The catalysed reaction is uridine(13) in tRNA = pseudouridine(13) in tRNA. Its function is as follows. Responsible for synthesis of pseudouridine from uracil-13 in transfer RNAs. The protein is tRNA pseudouridine synthase D of Geobacter sp. (strain M21).